A 196-amino-acid polypeptide reads, in one-letter code: dTDP-4-dehydro-6-deoxyglucose 3-epimerase (196 aa).

Substrate is bound by residues Arg-21, Glu-26, 45-47 (QVN), and Arg-57. His-60 (proton acceptor) is an active-site residue. Positions 70 and 117 each coordinate substrate. Tyr-130 (proton donor) is an active-site residue. 2 residues coordinate substrate: Glu-141 and Arg-166.

Belongs to the dTDP-4-dehydrorhamnose 3,5-epimerase family. In terms of assembly, homodimer.

It catalyses the reaction dTDP-4-dehydro-6-deoxy-alpha-D-glucose = dTDP-4-dehydro-6-deoxy-alpha-D-allose. The protein operates within antibiotic biosynthesis. Functionally, involved in the biosynthesis of dTDP-6-deoxy-D-allose, an intermediate in the biosynthesis of mycinose, which is one of the two unusual sugars attached to the 16-membered macrolactone ring of the aglycone antibiotic chalcomycin. Catalyzes the conversion of dTDP-4-oxo-6-deoxyglucose to dTDP-4-oxo-6-deoxyallose, via a C-3 epimerization. In Streptomyces bikiniensis, this protein is dTDP-4-dehydro-6-deoxyglucose 3-epimerase.